A 497-amino-acid polypeptide reads, in one-letter code: uncharacterized protein (497 aa).

Positions 58 to 79 (ISTRSFRNDGNDSDPQTLDPDA) are disordered. 12 consecutive transmembrane segments (helical) span residues 86-106 (IAFV…ALPI), 120-140 (FSGL…YPML), 155-175 (FRPL…YSLA), 180-200 (WLYL…MFLY), 222-242 (LNIL…GLLA), 258-278 (VGSW…SIFF), 309-329 (FMLV…AGYQ), 348-368 (GNFL…STFL), 378-398 (MLYG…LDVL), 407-427 (FVLY…LISL), 438-458 (ILVG…GAIC), and 468-488 (VGFI…LLFL).

It belongs to the major facilitator superfamily.

It is found in the membrane. This is an uncharacterized protein from Schizosaccharomyces pombe (strain 972 / ATCC 24843) (Fission yeast).